Consider the following 701-residue polypeptide: Sodium/hydrogen exchanger 6 (701 aa).

The next 2 membrane-spanning stretches (helical) occupy residues 71-91 (SANL…IWLF) and 103-123 (GLAM…IHVP). Asn-128 is a glycosylation site (N-linked (GlcNAc...) asparagine). 8 helical membrane passes run 176 to 196 (VTFD…FYAG), 211 to 231 (ILAY…SIMY), 252 to 272 (CLLF…AIFH), 278 to 298 (VELY…AIVL), 324 to 344 (IGIF…TGVV), 372 to 392 (TFLL…FCGI), 414 to 434 (FELL…LTLF), and 436 to 456 (FQNH…IFLG). A Glycyl lysine isopeptide (Lys-Gly) (interchain with G-Cter in ubiquitin) cross-link involves residue Lys-475. Transmembrane regions (helical) follow at residues 479–499 (NFQH…ALAI) and 515–535 (LLIV…MLSC).

This sequence belongs to the monovalent cation:proton antiporter 1 (CPA1) transporter (TC 2.A.36) family. In terms of assembly, homodimer. Interacts with RACK1; regulates the distribution of SLC9A6 between endosomes and the plasma membrane. Post-translationally, ubiquitinated (in vitro). In terms of processing, glycosylated. As to expression, ubiquitous. High expression in brain, skeletal muscle, and heart, but is also detected at lower levels in most other tissues.

Its subcellular location is the endosome membrane. The protein localises to the recycling endosome membrane. It localises to the early endosome membrane. It is found in the late endosome membrane. The protein resides in the cell membrane. The enzyme catalyses Na(+)(in) + H(+)(out) = Na(+)(out) + H(+)(in). It carries out the reaction K(+)(in) + H(+)(out) = K(+)(out) + H(+)(in). In terms of biological role, endosomal Na(+), K(+)/H(+) antiporter. Mediates the electroneutral exchange of endosomal luminal H(+) for a cytosolic Na(+) or K(+). By facilitating proton efflux, SLC9A6 counteracts the acidity generated by vacuolar (V)-ATPase, thereby limiting luminal acidification. Responsible for alkalizing and maintaining the endosomal pH, and consequently in, e.g., endosome maturation and trafficking of recycling endosomal cargo. Plays a critical role during neurodevelopment by regulating synaptic development and plasticity. Implicated in the maintenance of cell polarity in a manner that is dependent on its ability to modulate intravesicular pH. Regulates intracelular pH in some specialized cells, osteoclasts and stereocilia where this transporter localizes to the plasma membrane. The chain is Sodium/hydrogen exchanger 6 from Homo sapiens (Human).